We begin with the raw amino-acid sequence, 198 residues long: Pyridoxal 5'-phosphate synthase subunit PdxT (198 aa).

50–52 (GES) provides a ligand contact to L-glutamine. Catalysis depends on Cys82, which acts as the Nucleophile. L-glutamine is bound by residues Arg111 and 140–141 (IR). Residues His177 and Glu179 each act as charge relay system in the active site.

The protein belongs to the glutaminase PdxT/SNO family. In the presence of PdxS, forms a dodecamer of heterodimers. Only shows activity in the heterodimer.

It carries out the reaction aldehydo-D-ribose 5-phosphate + D-glyceraldehyde 3-phosphate + L-glutamine = pyridoxal 5'-phosphate + L-glutamate + phosphate + 3 H2O + H(+). The enzyme catalyses L-glutamine + H2O = L-glutamate + NH4(+). Its pathway is cofactor biosynthesis; pyridoxal 5'-phosphate biosynthesis. In terms of biological role, catalyzes the hydrolysis of glutamine to glutamate and ammonia as part of the biosynthesis of pyridoxal 5'-phosphate. The resulting ammonia molecule is channeled to the active site of PdxS. This chain is Pyridoxal 5'-phosphate synthase subunit PdxT, found in Leifsonia xyli subsp. xyli (strain CTCB07).